A 1073-amino-acid polypeptide reads, in one-letter code: Carbamoyl phosphate synthase large chain (1073 aa).

The interval 1 to 403 is carboxyphosphate synthetic domain; the sequence is MPKRTDIKSI…SLQKALRGLE (403 aa). ATP is bound by residues R129, R169, G175, G176, E208, L210, E215, G241, V242, H243, Q285, and E299. Residues 133-328 enclose the ATP-grasp 1 domain; that stretch reads DKAMKDIGLE…IAKIAAKLAI (196 aa). Residues Q285, E299, and N301 each contribute to the Mg(2+) site. Mn(2+)-binding residues include Q285, E299, and N301. The segment at 404–553 is oligomerization domain; it reads VGACGLDPKV…YSTYEEECEA (150 aa). The tract at residues 554–935 is carbamoyl phosphate synthetic domain; sequence NPSTRDKIMI…AFAKAQMGAS (382 aa). An ATP-grasp 2 domain is found at 678–869; sequence QQMVQRLSLL…LAMIAARVMA (192 aa). Positions 714, 753, 755, 760, 785, 786, 787, 788, 828, and 840 each coordinate ATP. Residues Q828, E840, and N842 each coordinate Mg(2+). Positions 828, 840, and 842 each coordinate Mn(2+). An MGS-like domain is found at 936–1073; the sequence is EVLPTGGTAF…LQDLHAGLKA (138 aa). An allosteric domain region spans residues 936–1073; that stretch reads EVLPTGGTAF…LQDLHAGLKA (138 aa).

This sequence belongs to the CarB family. In terms of assembly, composed of two chains; the small (or glutamine) chain promotes the hydrolysis of glutamine to ammonia, which is used by the large (or ammonia) chain to synthesize carbamoyl phosphate. Tetramer of heterodimers (alpha,beta)4. It depends on Mg(2+) as a cofactor. The cofactor is Mn(2+).

The catalysed reaction is hydrogencarbonate + L-glutamine + 2 ATP + H2O = carbamoyl phosphate + L-glutamate + 2 ADP + phosphate + 2 H(+). It carries out the reaction hydrogencarbonate + NH4(+) + 2 ATP = carbamoyl phosphate + 2 ADP + phosphate + 2 H(+). The protein operates within amino-acid biosynthesis; L-arginine biosynthesis; carbamoyl phosphate from bicarbonate: step 1/1. It functions in the pathway pyrimidine metabolism; UMP biosynthesis via de novo pathway; (S)-dihydroorotate from bicarbonate: step 1/3. Large subunit of the glutamine-dependent carbamoyl phosphate synthetase (CPSase). CPSase catalyzes the formation of carbamoyl phosphate from the ammonia moiety of glutamine, carbonate, and phosphate donated by ATP, constituting the first step of 2 biosynthetic pathways, one leading to arginine and/or urea and the other to pyrimidine nucleotides. The large subunit (synthetase) binds the substrates ammonia (free or transferred from glutamine from the small subunit), hydrogencarbonate and ATP and carries out an ATP-coupled ligase reaction, activating hydrogencarbonate by forming carboxy phosphate which reacts with ammonia to form carbamoyl phosphate. The polypeptide is Carbamoyl phosphate synthase large chain (Pseudomonas putida (strain ATCC 47054 / DSM 6125 / CFBP 8728 / NCIMB 11950 / KT2440)).